A 349-amino-acid chain; its full sequence is Ribosomal RNA large subunit methyltransferase Cfr (349 aa).

The Proton acceptor role is filled by E89. One can recognise a Radical SAM core domain in the interval 96–331 (KAGWESFCIS…VTVRSQFGID (236 aa)). C103 and C336 form a disulfide bridge. C110, C114, and C117 together coordinate [4Fe-4S] cluster. S-adenosyl-L-methionine contacts are provided by residues 156–157 (GE), S187, 210–212 (SLH), and N291. C336 acts as the S-methylcysteine intermediate in catalysis.

It belongs to the radical SAM superfamily. RlmN family. Cfr subfamily. It depends on [4Fe-4S] cluster as a cofactor.

The protein resides in the cytoplasm. The catalysed reaction is adenosine(2503) in 23S rRNA + 2 reduced [2Fe-2S]-[ferredoxin] + 2 S-adenosyl-L-methionine = 8-methyladenosine(2503) in 23S rRNA + 5'-deoxyadenosine + L-methionine + 2 oxidized [2Fe-2S]-[ferredoxin] + S-adenosyl-L-homocysteine. Functionally, specifically methylates position 8 of adenine 2503 in 23S rRNA. Confers resistance to some classes of antibiotics. This is Ribosomal RNA large subunit methyltransferase Cfr from Bacillus velezensis (strain DSM 23117 / BGSC 10A6 / LMG 26770 / FZB42) (Bacillus amyloliquefaciens subsp. plantarum).